A 572-amino-acid chain; its full sequence is Squalene monooxygenase (572 aa).

At 1 to 19 (MWTFLGIATFTYFYKKCGD) the chain is on the cytoplasmic side. The interval 1 to 98 (MWTFLGIATF…EQLESKKCRK (98 aa)) is interaction with MARCHF6. The stretch at 20–40 (VTLANKELLLCVLVFLSLGLV) is an intramembrane region. The Cytoplasmic segment spans residues 41 to 572 (LSYRCRHRHG…IYSEMKYLVH (532 aa)). A required for degradation in response to high membrane cholesterol levels region spans residues 61 to 72 (QFAAFSDILSAL). The tract at residues 116-572 (TSFVTDPEVI…IYSEMKYLVH (457 aa)) is sufficient for enzyme activity. FAD-binding positions include 131–132 (VL), 151–152 (ER), R159, R232, V248, D406, and M419. The interval 514 to 572 (PLVLIRHFFSVAIYATYFCFKSEPWATKPRALFSSGAVLYKACSILFPLIYSEMKYLVH) is hydrophobic; mediates interaction with membranes.

This sequence belongs to the squalene monooxygenase family. Interacts (via N-terminal domain) with MARCHF6. Interacts with SMIM22; this interaction modulates lipid droplet formation. The cofactor is FAD. Post-translationally, ubiquitinated by MARCHF6 in response to high cholesterol levels in intracellular membranes, leading to proteasomal degradation. Detected in liver.

The protein localises to the microsome membrane. It localises to the endoplasmic reticulum membrane. It catalyses the reaction squalene + reduced [NADPH--hemoprotein reductase] + O2 = (S)-2,3-epoxysqualene + oxidized [NADPH--hemoprotein reductase] + H2O + H(+). It functions in the pathway terpene metabolism; lanosterol biosynthesis; lanosterol from farnesyl diphosphate: step 2/3. Its function is as follows. Catalyzes the stereospecific oxidation of squalene to (S)-2,3-epoxysqualene, and is considered to be a rate-limiting enzyme in steroid biosynthesis. This chain is Squalene monooxygenase (Sqle), found in Mus musculus (Mouse).